A 277-amino-acid polypeptide reads, in one-letter code: Inner kinetochore subunit sim4 (277 aa).

Residues 96–138 are a coiled coil; the sequence is NNISDLKKNLHSNKKLEAVLKEELHQIKKFSSDLQSLKSSMGE.

It belongs to the CENP-K/MCM22 family. As to quaternary structure, component of the inner kinetochore constitutive centromere-associated network (CCAN) (also known as central kinetochore Sim4 complex in fission yeast), which is composed of at least cnl2, cnp3, cnp20, fta1, fta2, fta3, fta4, fta6, fta7, mal2, mhf1, mhf2, mis6, mis15, mis17, sim4 and wip1. Interacts with mis6 and dad1.

It is found in the nucleus. The protein resides in the chromosome. It localises to the centromere. Component of the kinetochore, a multiprotein complex that assembles on centromeric DNA and attaches chromosomes to spindle microtubules, mediating chromosome segregation and sister chromatid segregation during meiosis and mitosis. Component of the inner kinetochore constitutive centromere-associated network (CCAN), which serves as a structural platform for outer kinetochore assembly. The protein is Inner kinetochore subunit sim4 (sim4) of Schizosaccharomyces pombe (strain 972 / ATCC 24843) (Fission yeast).